The sequence spans 548 residues: Frizzled-7-B (548 aa).

The N-terminal stretch at 1-18 is a signal peptide; the sequence is MLAPVSLLFCLFLQLCPS. At 19 to 230 the chain is on the extracellular side; it reads AQQYHGEKGI…EEEVRFARLW (212 aa). Residues 31-150 enclose the FZ domain; it reads PDHGFCQPIS…HGAGEICVGQ (120 aa). Disulfide bonds link Cys-36/Cys-97, Cys-44/Cys-90, Cys-81/Cys-118, Cys-107/Cys-147, and Cys-111/Cys-135. Asn-50 carries an N-linked (GlcNAc...) asparagine glycan. Asn-151 carries an N-linked (GlcNAc...) asparagine glycan. A helical membrane pass occupies residues 231-251; sequence VGIWAILCGISTLFTVLTYLV. Topologically, residues 252–262 are cytoplasmic; it reads DMRRFSYPERP. The chain crosses the membrane as a helical span at residues 263–283; that stretch reads IIFLSGCYFMVAVAYTAGFLL. Over 284–311 the chain is Extracellular; sequence EERAVCVERFSEDSYRTVAQGTKKEGCT. A helical transmembrane segment spans residues 312–332; the sequence is ILFMILYFFGMASSIWWVILA. Topologically, residues 333–353 are cytoplasmic; that stretch reads LTWFLSAGMKWGHEAIEANSQ. The chain crosses the membrane as a helical span at residues 354–374; it reads YFHLAAWAVPAVKTITILAMG. Topologically, residues 375–397 are extracellular; sequence QVDGDVLSGVCYVGINSVDSLRG. The chain crosses the membrane as a helical span at residues 398–418; that stretch reads FVLAPLFVYLFLGTSFLLAGF. The Cytoplasmic segment spans residues 419–444; that stretch reads VSLFRIRTIMKHDGTKTEKLEKLMVR. The helical transmembrane segment at 445–465 threads the bilayer; sequence IGVFSVMYTVPATIVLACYFY. The Extracellular segment spans residues 466 to 502; sequence EQAFRDTWEKTWLVHTCKGYAVPCPNYNFAPMSPDFT. The chain crosses the membrane as a helical span at residues 503–523; the sequence is VFMIKYLMTMIVGITSSFWIW. The Cytoplasmic segment spans residues 524-548; sequence SGKTLQSWRRFYHRLGNGSKGETAV. The Lys-Thr-X-X-X-Trp motif, mediates interaction with the PDZ domain of Dvl family members motif lies at 526–531; that stretch reads KTLQSW. Positions 546 to 548 match the PDZ-binding motif; the sequence is TAV.

This sequence belongs to the G-protein coupled receptor Fz/Smo family. As to quaternary structure, interacts with wnt11 and sdc4. The extracellular domain interacts with the extracellular domain of pcdh8/papc. Interacts (via C-terminus) with dvl1 (via PDZ domain). In terms of tissue distribution, during gastrulation, broadly expressed on the dorsal side of the embryo in deep mesodermal cells surrounding the blastopore lip and in presumptive anterior neuroectoderm. During neurulation, localized to the cranial neural crest and heart field where expression is retained at later stages in addition to new areas of expression in the neural tube, pronephros and tailbud. At tailbud stage, expressed in the pronephric duct, and broad head expression becomes more restricted to the hindbrain. In tadpoles, strongly expressed in the eye and the pericardium and myocardium of the developing heart.

It is found in the cell membrane. The protein localises to the endosome membrane. Receptor for Wnt proteins. Acts in both canonical and non-canonical Wnt pathways. Although different papers report differing Wnt preferences, wnt5a, wnt8b and wnt11 have been proposed as synergists. In the canonical Wnt pathway, acts via beta-catenin to promote the expression of the dorsal genes siamois, twin and nodal3 and to establish the dorsal axis of the embryo and induce dorsal mesoderm formation. In a non-canonical Wnt/planar cell polarity (PCP) pathway, acts with sdc4 and dvl2/dsh to regulate convergent extension cell movements during gastrulation. Triggers phosphorylation of dvl2/dsh and its translocation to the plasma membrane. In a third branch of Wnt signaling, acts in a non-canonical pathway via trimeric G proteins, and independently of dvl2/dsh, to recruit protein kinase C (PKC) to the membrane and thus activate PKC. PKC signaling controls cell sorting and tissue separation during gastrulation. The protein is Frizzled-7-B (fzd7-b) of Xenopus laevis (African clawed frog).